The chain runs to 174 residues: Ribosome rescue factor SmrB (174 aa).

One can recognise a Smr domain in the interval 96–171 (LDLHGMNQQQ…GDSAILVLLD (76 aa)).

The protein belongs to the SmrB family. In terms of assembly, associates with collided ribosomes, but not with correctly translating polysomes.

Functionally, acts as a ribosome collision sensor. Detects stalled/collided disomes (pairs of ribosomes where the leading ribosome is stalled and a second ribosome has collided with it) and endonucleolytically cleaves mRNA at the 5' boundary of the stalled ribosome. Stalled/collided disomes form a new interface (primarily via the 30S subunits) that binds SmrB. Cleaved mRNA becomes available for tmRNA ligation, leading to ribosomal subunit dissociation and rescue of stalled ribosomes. In Aeromonas hydrophila subsp. hydrophila (strain ATCC 7966 / DSM 30187 / BCRC 13018 / CCUG 14551 / JCM 1027 / KCTC 2358 / NCIMB 9240 / NCTC 8049), this protein is Ribosome rescue factor SmrB.